The following is a 660-amino-acid chain: Acetyl-coenzyme A synthetase (660 aa).

CoA-binding positions include 197–200 (RGGK) and Thr-317. ATP is bound by residues 397 to 399 (GEP), 421 to 426 (DTFWQT), Asp-512, and Arg-528. Residue Ser-536 participates in CoA binding. ATP is bound at residue Arg-539. 2 residues coordinate Mg(2+): Val-550 and Val-555. At Lys-625 the chain carries N6-acetyllysine.

It belongs to the ATP-dependent AMP-binding enzyme family. Mg(2+) is required as a cofactor. Acetylated. Deacetylation by the SIR2-homolog deacetylase activates the enzyme.

It catalyses the reaction acetate + ATP + CoA = acetyl-CoA + AMP + diphosphate. Its function is as follows. Catalyzes the conversion of acetate into acetyl-CoA (AcCoA), an essential intermediate at the junction of anabolic and catabolic pathways. AcsA undergoes a two-step reaction. In the first half reaction, AcsA combines acetate with ATP to form acetyl-adenylate (AcAMP) intermediate. In the second half reaction, it can then transfer the acetyl group from AcAMP to the sulfhydryl group of CoA, forming the product AcCoA. The polypeptide is Acetyl-coenzyme A synthetase (Cupriavidus pinatubonensis (strain JMP 134 / LMG 1197) (Cupriavidus necator (strain JMP 134))).